Consider the following 318-residue polypeptide: Nuclear egress protein 1 (318 aa).

Residues 129 to 239 form a CCCH-type zinc finger; that stretch reads CLRLSPFGHS…HLLLQGTSLH (111 aa).

Belongs to the herpesviridae NEC1 protein family. In terms of assembly, forms a heterodimeric viral nuclear egress complex (NEC) with NEC2. Interacts with capsid vertex specific component 2/CVC2; this interaction directs the capsid to the host inner nuclear membrane to initiate budding. Phosphorylated at serine residues in the N-terminus. This phosphorylation regulates the localization within the inner nuclear membrane.

It localises to the host nucleus inner membrane. In terms of biological role, plays an essential role in virion nuclear egress, the first step of virion release from infected cell. Within the host nucleus, NEC1 interacts with the newly formed capsid through the vertexes and directs it to the inner nuclear membrane by associating with NEC2. Induces the budding of the capsid at the inner nuclear membrane as well as its envelopment into the perinuclear space. There, the NEC1/NEC2 complex promotes the fusion of the enveloped capsid with the outer nuclear membrane and the subsequent release of the viral capsid into the cytoplasm where it will reach the secondary budding sites in the host Golgi or trans-Golgi network. The sequence is that of Nuclear egress protein 1 from Homo sapiens (Human).